The chain runs to 1403 residues: Eukaryotic translation initiation factor 4 gamma (1403 aa).

Polar residues-rich tracts occupy residues 1-11 (MSSKPPSNTPK), 19-39 (ASSQ…TATA), and 50-60 (EPTNTSRANAQ). Disordered stretches follow at residues 1 to 381 (MSSK…GSTP), 439 to 464 (SRSG…RNGF), 488 to 774 (VVVP…KRDL), and 861 to 1003 (AFSD…EALL). Ser-83 is modified (phosphoserine). Residues 109-137 (DNTSKPSANSSAERTSSQHQKPETSSQIG) show a composition bias toward polar residues. Low complexity-rich tracts occupy residues 190–208 (SGVS…SVTS) and 231–248 (PRPT…ANGA). Over residues 249-269 (PTNKPSTDINTTDPATQTTQV) the composition is skewed to polar residues. Positions 270–291 (SASNSPALSGSSTPSNTSSRSN) are enriched in low complexity. Residues 298-308 (FSEKRHYDRYG) are compositionally biased toward basic and acidic residues. The segment covering 325–334 (NYNNSGNNRN) has biased composition (low complexity). Polar residues-rich tracts occupy residues 346-381 (RNYN…GSTP), 439-460 (SRSG…TLSP), and 493-508 (KNAS…SRAE). Phosphoserine is present on residues Ser-452, Ser-455, Ser-456, and Ser-459. Positions 537 to 714 (IQEKAEAEAK…GKREADKNPE (178 aa)) are enriched in basic and acidic residues. The segment covering 720–737 (PLASSEANVDTSKQTNAT) has biased composition (polar residues). Residues 741 to 754 (VVDKTKVEKLKASE) show a composition bias toward basic and acidic residues. The span at 757–768 (STSSLSSPSHST) shows a compositional bias: low complexity. Ser-866 and Ser-882 each carry phosphoserine. Positions 868–886 (RGMYSSSRQSSRSGSNTHS) are enriched in low complexity. Thr-884 carries the post-translational modification Phosphothreonine. Ser-886, Ser-911, Ser-919, and Ser-921 each carry phosphoserine. A Phosphotyrosine modification is found at Tyr-923. Over residues 986–995 (KLTEKPAETK) the composition is skewed to basic and acidic residues. Residues 1009–1245 (QRKVKGSLNK…MDVMDSRKNG (237 aa)) enclose the MIF4G domain. The tract at residues 1266-1403 (AERKKALAES…QKDSNSKTSS (138 aa)) is disordered. Positions 1284-1295 (HGRDMNRGDSRM) are enriched in basic and acidic residues. Polar residues-rich tracts occupy residues 1302–1313 (PPFSSSDWSNNK), 1328–1341 (SGTQ…SLSS), and 1348–1358 (VSRTPSRQNSA). Position 1333 is a phosphoserine (Ser-1333). The segment covering 1383–1403 (LEEHDHDNDGGQKDSNSKTSS) has biased composition (basic and acidic residues).

The protein belongs to the eukaryotic initiation factor 4G family.

The protein localises to the cytoplasm. It is found in the perinuclear region. In terms of biological role, component of the protein complex eIF4F, which is involved in the recognition of the mRNA cap, ATP-dependent unwinding of 5'-terminal secondary structure and recruitment of mRNA to the ribosome. The protein is Eukaryotic translation initiation factor 4 gamma (tif471) of Schizosaccharomyces pombe (strain 972 / ATCC 24843) (Fission yeast).